A 107-amino-acid chain; its full sequence is Period circadian protein (107 aa).

Residues 81 to 107 are disordered; it reads ITNGSNTGTGTSSGSFQPPLLTEALLN. Over residues 82–95 the composition is skewed to low complexity; that stretch reads TNGSNTGTGTSSGS.

In terms of assembly, forms a heterodimer with timeless (TIM); the complex then translocates into the nucleus. Phosphorylated with a circadian rhythmicity, probably by the double-time protein (dbt). Phosphorylation could be implicated in the stability of per monomer and in the formation of heterodimer per-tim.

It is found in the nucleus. The protein localises to the cytoplasm. It localises to the perinuclear region. Essential for biological clock functions. Determines the period length of circadian and ultradian rhythms; an increase in PER dosage leads to shortened circadian rhythms and a decrease leads to lengthened circadian rhythms. Essential for the circadian rhythmicity of locomotor activity, eclosion behavior, and for the rhythmic component of the male courtship song that originates in the thoracic nervous system. The biological cycle depends on the rhythmic formation and nuclear localization of the TIM-PER complex. Light induces the degradation of TIM, which promotes elimination of PER. Nuclear activity of the heterodimer coordinatively regulates PER and TIM transcription through a negative feedback loop. Behaves as a negative element in circadian transcriptional loop. Does not appear to bind DNA, suggesting indirect transcriptional inhibition. The sequence is that of Period circadian protein (per) from Beris vallata (Common orange legionnaire).